We begin with the raw amino-acid sequence, 476 residues long: uncharacterized protein (476 aa).

Positions 7 to 39 (SRFYTNLLIANYLKHNGLEDTLAAFIRETALPL) constitute a LisH domain.

This is an uncharacterized protein from Saccharomyces cerevisiae (strain ATCC 204508 / S288c) (Baker's yeast).